We begin with the raw amino-acid sequence, 206 residues long: Putative amino-acid transporter YggA (206 aa).

6 helical membrane passes run 1–21, 37–57, 65–85, 116–136, 148–168, and 185–205; these read MFAT…PIGA, LLAA…GVFG, SPIG…WFGI, LGVT…LGSF, FAAG…FGAA, and TIVG…ALLA.

The protein belongs to the LysE/ArgO transporter (TC 2.A.75) family.

It localises to the cell membrane. The protein is Putative amino-acid transporter YggA (yggA) of Aeromonas salmonicida.